A 349-amino-acid chain; its full sequence is uncharacterized protein (349 aa).

The chain crosses the membrane as a helical span at residues 221–241 (AFVVWIGSGLNIIWWTGIVLL). Over residues 328–339 (VASAPPAVPSQP) the composition is skewed to pro residues. The interval 328–349 (VASAPPAVPSQPPEYSSVFPPV) is disordered.

The protein resides in the host membrane. This is an uncharacterized protein from Human cytomegalovirus (strain Merlin) (HHV-5).